A 287-amino-acid polypeptide reads, in one-letter code: 2-dehydro-3-deoxyphosphooctonate aldolase (287 aa).

This sequence belongs to the KdsA family.

It localises to the cytoplasm. The catalysed reaction is D-arabinose 5-phosphate + phosphoenolpyruvate + H2O = 3-deoxy-alpha-D-manno-2-octulosonate-8-phosphate + phosphate. It participates in carbohydrate biosynthesis; 3-deoxy-D-manno-octulosonate biosynthesis; 3-deoxy-D-manno-octulosonate from D-ribulose 5-phosphate: step 2/3. Its pathway is bacterial outer membrane biogenesis; lipopolysaccharide biosynthesis. This chain is 2-dehydro-3-deoxyphosphooctonate aldolase, found in Bradyrhizobium sp. (strain ORS 278).